Consider the following 230-residue polypeptide: Bidirectional sugar transporter SWEET2b (230 aa).

The Extracellular segment spans residues 1 to 6 (MDSLYD). The chain crosses the membrane as a helical span at residues 7–27 (ISCFAAGLAGNIFALALFLSP). The 86-residue stretch at 13 to 98 (GLAGNIFALA…CLFIFYADSR (86 aa)) folds into the MtN3/slv 1 domain. The Cytoplasmic portion of the chain corresponds to 28 to 45 (VTTFKRILKAKSTERFDG). Residues 46–66 (LPYLFSLLNCLICLWYGLPWV) traverse the membrane as a helical segment. The Extracellular portion of the chain corresponds to 67-72 (ADGRLL). The helical transmembrane segment at 73 to 93 (VATVNGIGAVFQLAYICLFIF) threads the bilayer. The Cytoplasmic portion of the chain corresponds to 94 to 103 (YADSRKTRMK). The helical transmembrane segment at 104-124 (IIGLLVLVVCGFALVSHASVF) threads the bilayer. Topologically, residues 125 to 137 (FFDQPLRQQFVGA) are extracellular. In terms of domain architecture, MtN3/slv 2 spans 133-217 (QFVGAVSMAS…LALYAYYSRK (85 aa)). The helical transmembrane segment at 138-158 (VSMASLISMFASPLAVMGVVI) threads the bilayer. Residues 159–167 (RSESVEFMP) are Cytoplasmic-facing. A helical membrane pass occupies residues 168 to 188 (FYLSLSTFLMSASFALYGLLL). The Extracellular segment spans residues 189–190 (RD). The helical transmembrane segment at 191 to 211 (FFIYFPNGLGLILGAMQLALY) threads the bilayer. At 212–230 (AYYSRKWRGQDSSAPLLLA) the chain is on the cytoplasmic side.

The protein belongs to the SWEET sugar transporter family. As to quaternary structure, forms homooligomers and/or heterooligomers.

Its subcellular location is the cell membrane. Functionally, mediates both low-affinity uptake and efflux of sugar across the plasma membrane. In Oryza sativa subsp. indica (Rice), this protein is Bidirectional sugar transporter SWEET2b (SWEET2B).